Consider the following 475-residue polypeptide: Aspartyl/glutamyl-tRNA(Asn/Gln) amidotransferase subunit B (475 aa).

It belongs to the GatB/GatE family. GatB subfamily. As to quaternary structure, heterotrimer of A, B and C subunits.

It carries out the reaction L-glutamyl-tRNA(Gln) + L-glutamine + ATP + H2O = L-glutaminyl-tRNA(Gln) + L-glutamate + ADP + phosphate + H(+). It catalyses the reaction L-aspartyl-tRNA(Asn) + L-glutamine + ATP + H2O = L-asparaginyl-tRNA(Asn) + L-glutamate + ADP + phosphate + 2 H(+). Its function is as follows. Allows the formation of correctly charged Asn-tRNA(Asn) or Gln-tRNA(Gln) through the transamidation of misacylated Asp-tRNA(Asn) or Glu-tRNA(Gln) in organisms which lack either or both of asparaginyl-tRNA or glutaminyl-tRNA synthetases. The reaction takes place in the presence of glutamine and ATP through an activated phospho-Asp-tRNA(Asn) or phospho-Glu-tRNA(Gln). The polypeptide is Aspartyl/glutamyl-tRNA(Asn/Gln) amidotransferase subunit B (Hydrogenovibrio crunogenus (strain DSM 25203 / XCL-2) (Thiomicrospira crunogena)).